The primary structure comprises 1072 residues: Carbamoyl phosphate synthase large chain (1072 aa).

The carboxyphosphate synthetic domain stretch occupies residues 1–401 (MPKRLDINTI…SLLKAVRSLE (401 aa)). The ATP site is built by R129, R169, G175, G176, K208, I210, E215, G241, V242, H243, Q284, and E298. Positions 133-327 (RTLMQELNEP…IAKLAAKIAV (195 aa)) constitute an ATP-grasp 1 domain. The Mg(2+) site is built by Q284, E298, and N300. Mn(2+) is bound by residues Q284, E298, and N300. Residues 402–546 (LGIYHLELDH…YSTYADENEL (145 aa)) are oligomerization domain. Residues 547-929 (IVTDRKSVVV…ALYKGLVASG (383 aa)) are carbamoyl phosphate synthetic domain. In terms of domain architecture, ATP-grasp 2 spans 671–861 (EAALTKLGIP…MANVATKVIL (191 aa)). ATP-binding residues include R707, R746, E752, G777, V778, H779, S780, Q820, and E832. Positions 820, 832, and 834 each coordinate Mg(2+). Residues Q820, E832, and N834 each coordinate Mn(2+). Residues 930 to 1072 (INIPTHGSVI…QTKRHEVVHA (143 aa)) enclose the MGS-like domain. An allosteric domain region spans residues 930-1072 (INIPTHGSVI…QTKRHEVVHA (143 aa)).

It belongs to the CarB family. As to quaternary structure, composed of two chains; the small (or glutamine) chain promotes the hydrolysis of glutamine to ammonia, which is used by the large (or ammonia) chain to synthesize carbamoyl phosphate. Tetramer of heterodimers (alpha,beta)4. Mg(2+) serves as cofactor. It depends on Mn(2+) as a cofactor.

The enzyme catalyses hydrogencarbonate + L-glutamine + 2 ATP + H2O = carbamoyl phosphate + L-glutamate + 2 ADP + phosphate + 2 H(+). It carries out the reaction hydrogencarbonate + NH4(+) + 2 ATP = carbamoyl phosphate + 2 ADP + phosphate + 2 H(+). It functions in the pathway amino-acid biosynthesis; L-arginine biosynthesis; carbamoyl phosphate from bicarbonate: step 1/1. It participates in pyrimidine metabolism; UMP biosynthesis via de novo pathway; (S)-dihydroorotate from bicarbonate: step 1/3. Its function is as follows. Large subunit of the glutamine-dependent carbamoyl phosphate synthetase (CPSase). CPSase catalyzes the formation of carbamoyl phosphate from the ammonia moiety of glutamine, carbonate, and phosphate donated by ATP, constituting the first step of 2 biosynthetic pathways, one leading to arginine and/or urea and the other to pyrimidine nucleotides. The large subunit (synthetase) binds the substrates ammonia (free or transferred from glutamine from the small subunit), hydrogencarbonate and ATP and carries out an ATP-coupled ligase reaction, activating hydrogencarbonate by forming carboxy phosphate which reacts with ammonia to form carbamoyl phosphate. The sequence is that of Carbamoyl phosphate synthase large chain from Bacillus anthracis (strain A0248).